Reading from the N-terminus, the 277-residue chain is Ubiquinone biosynthesis protein COQ4, mitochondrial (277 aa).

The transit peptide at 1–14 (MLTKRALRTTDPYR) directs the protein to the mitochondrion. Residues His157, Asp158, His161, and Glu173 each coordinate Zn(2+).

Belongs to the COQ4 family. In terms of assembly, component of a multi-subunit COQ enzyme complex, composed of at least COQ3, COQ4, COQ5, COQ6, COQ7 and COQ9. Requires Zn(2+) as cofactor.

Its subcellular location is the mitochondrion inner membrane. It carries out the reaction a 4-hydroxy-3-methoxy-5-(all-trans-polyprenyl)benzoate + H(+) = a 2-methoxy-6-(all-trans-polyprenyl)phenol + CO2. It functions in the pathway cofactor biosynthesis; ubiquinone biosynthesis. Its function is as follows. Lyase that catalyzes the C1-decarboxylation of 4-hydroxy-3-methoxy-5-(all-trans-polyprenyl)benzoic acid into 2-methoxy-6-(all-trans-polyprenyl)phenol during ubiquinone biosynthesis. The chain is Ubiquinone biosynthesis protein COQ4, mitochondrial from Ajellomyces capsulatus (strain G186AR / H82 / ATCC MYA-2454 / RMSCC 2432) (Darling's disease fungus).